Reading from the N-terminus, the 697-residue chain is Transmembrane protein 168 (697 aa).

The next 3 membrane-spanning stretches (helical) occupy residues 36 to 56 (LGYLARINLLVAICLGLYVRW), 63 to 83 (LILVIFILGLFVLGIASILYY), and 89 to 109 (AASLSLSNLWFGFLLGLLCFL). A glycan (N-linked (GlcNAc...) asparagine) is linked at N111. Helical transmembrane passes span 172 to 192 (MLVEKSLSVILLVMALAMLII), 199 to 219 (FLAIPNLIIFSVLLFFSSLET), 223 to 243 (PIAFACFFICLVTDPFLDIYF), 265 to 285 (LSVLFTAMIELTFFILSAFKL), and 293 to 313 (FVIPGFSIFGFFWMICHIIFL). The N-linked (GlcNAc...) asparagine glycan is linked to N337. The next 2 membrane-spanning stretches (helical) occupy residues 352 to 372 (FCLISEQLVFFSLLATAILGA) and 380 to 400 (GIFLSMFLIVLPLESMAHGLF). Residues N533 and N598 are each glycosylated (N-linked (GlcNAc...) asparagine).

The protein belongs to the TMEM168 family.

Its subcellular location is the nucleus membrane. Plays a key role in maintaining the cardiac electrical stability by modulating cell surface expression of SCN5A. Plays a role i the modulation of anxiety behavior by regulating GABAergic neuronal system in the nucleus accumbens. In Mus musculus (Mouse), this protein is Transmembrane protein 168 (Tmem168).